Reading from the N-terminus, the 258-residue chain is UPF0758 protein Bcep1808_2579 (258 aa).

Positions 136–258 constitute an MPN domain; the sequence is PIDSPGAVED…TFSFARAGWL (123 aa). The Zn(2+) site is built by His207, His209, and Asp220. The JAMM motif signature appears at 207–220; the sequence is HNHPSGAVQPSAED.

The protein belongs to the UPF0758 family.

The chain is UPF0758 protein Bcep1808_2579 from Burkholderia vietnamiensis (strain G4 / LMG 22486) (Burkholderia cepacia (strain R1808)).